A 71-amino-acid polypeptide reads, in one-letter code: Beta-defensin 124 (71 aa).

The N-terminal stretch at 1-22 (MTQLLLFLVALLVLGHVPSGRS) is a signal peptide. 3 disulfides stabilise this stretch: Cys27–Cys54, Cys34–Cys48, and Cys38–Cys55.

The protein belongs to the beta-defensin family.

It localises to the secreted. Has antibacterial activity. In Homo sapiens (Human), this protein is Beta-defensin 124 (DEFB124).